We begin with the raw amino-acid sequence, 229 residues long: Platelet-activating factor acetylhydrolase IB subunit alpha2 (229 aa).

Residues S48, D193, and H196 contribute to the active site.

Belongs to the 'GDSL' lipolytic enzyme family. Platelet-activating factor acetylhydrolase IB beta/gamma subunits subfamily. As to quaternary structure, forms a catalytic dimer which is either homodimer (alpha2/alpha2 homodimer) or heterodimer with PAFAH1B3 (alpha2/alpha1 heterodimer). Component of the cytosolic (PAF-AH (I)) heterotetrameric enzyme, which is composed of PAFAH1B1 (beta), PAFAH1B2 (alpha2) and PAFAH1B3 (alpha1) subunits. The catalytic activity of the enzyme resides in the alpha1 (PAFAH1B3) and alpha2 (PAFAH1B2) subunits, whereas the beta subunit (PAFAH1B1) has regulatory activity. Trimer formation is not essential for the catalytic activity.

It is found in the cytoplasm. The enzyme catalyses a 1-O-alkyl-2-acetyl-sn-glycero-3-phosphocholine + H2O = a 1-O-alkyl-sn-glycero-3-phosphocholine + acetate + H(+). The catalysed reaction is 1-O-hexadecyl-2-acetyl-sn-glycero-3-phosphocholine + H2O = 1-O-hexadecyl-sn-glycero-3-phosphocholine + acetate + H(+). It carries out the reaction 1-O-hexadecyl-2-acetyl-sn-glycero-3-phosphate + H2O = 1-O-hexadecyl-sn-glycero-3-phosphate + acetate + H(+). It catalyses the reaction 1-O-hexadecyl-2-acetyl-sn-glycero-3-phosphoethanolamine + H2O = 1-O-hexadecyl-sn-glycero-3-phosphoethanolamine + acetate + H(+). Its function is as follows. Alpha2 catalytic subunit of the cytosolic type I platelet-activating factor (PAF) acetylhydrolase (PAF-AH (I)) heterotetrameric enzyme that catalyzes the hydrolyze of the acetyl group at the sn-2 position of PAF and its analogs and modulates the action of PAF. The polypeptide is Platelet-activating factor acetylhydrolase IB subunit alpha2 (PAFAH1B2) (Gallus gallus (Chicken)).